We begin with the raw amino-acid sequence, 588 residues long: Aspartate--tRNA ligase (588 aa).

Glu177 is a binding site for L-aspartate. Residues 201-204 (QLFK) are aspartate. Arg223 is an L-aspartate binding site. ATP-binding positions include 223–225 (RDE) and Gln232. His451 serves as a coordination point for L-aspartate. Glu485 is a binding site for ATP. Arg492 is an L-aspartate binding site. An ATP-binding site is contributed by 537–540 (GLDR).

It belongs to the class-II aminoacyl-tRNA synthetase family. Type 1 subfamily. Homodimer.

Its subcellular location is the cytoplasm. The enzyme catalyses tRNA(Asp) + L-aspartate + ATP = L-aspartyl-tRNA(Asp) + AMP + diphosphate. In terms of biological role, catalyzes the attachment of L-aspartate to tRNA(Asp) in a two-step reaction: L-aspartate is first activated by ATP to form Asp-AMP and then transferred to the acceptor end of tRNA(Asp). The protein is Aspartate--tRNA ligase of Staphylococcus epidermidis (strain ATCC 35984 / DSM 28319 / BCRC 17069 / CCUG 31568 / BM 3577 / RP62A).